Consider the following 167-residue polypeptide: Putative defense protein Hdd11-like (167 aa).

Positions 1 to 18 are cleaved as a signal peptide; it reads MMFTYVVAVASVVALTSA. The region spanning 19–167 is the Reelin domain; the sequence is YPTGAPPSAC…ESAPVKVLSH (149 aa). The cysteines at positions 28 and 105 are disulfide-linked.

Belongs to the insect defense protein family. In terms of tissue distribution, in larvae, high expression in the fat body and low expression in midgut, hemocytes and malpighian tubules. No expression in silkgland.

Its subcellular location is the secreted. Functionally, may have antimicrobial activity. In Samia ricini (Indian eri silkmoth), this protein is Putative defense protein Hdd11-like.